A 36-amino-acid chain; its full sequence is Cecropin-D (36 aa).

K36 carries the lysine amide modification.

It belongs to the cecropin family.

Its subcellular location is the secreted. Functionally, cecropins have lytic and antibacterial activity against several Gram-positive and Gram-negative bacteria. This Antheraea pernyi (Chinese oak silk moth) protein is Cecropin-D.